Consider the following 171-residue polypeptide: Large ribosomal subunit protein uL10 (171 aa).

The protein belongs to the universal ribosomal protein uL10 family. Part of the ribosomal stalk of the 50S ribosomal subunit. The N-terminus interacts with L11 and the large rRNA to form the base of the stalk. The C-terminus forms an elongated spine to which L12 dimers bind in a sequential fashion forming a multimeric L10(L12)X complex.

In terms of biological role, forms part of the ribosomal stalk, playing a central role in the interaction of the ribosome with GTP-bound translation factors. The sequence is that of Large ribosomal subunit protein uL10 from Maricaulis maris (strain MCS10) (Caulobacter maris).